Reading from the N-terminus, the 360-residue chain is GDSL esterase/lipase At2g31540 (360 aa).

Residues 1–23 form the signal peptide; that stretch reads MSTSKAITLTLFIATTLLAPCNA. S42 functions as the Nucleophile in the catalytic mechanism. 2 N-linked (GlcNAc...) asparagine glycosylation sites follow: N104 and N326. Residues D334 and H337 contribute to the active site.

Belongs to the 'GDSL' lipolytic enzyme family.

It is found in the secreted. The polypeptide is GDSL esterase/lipase At2g31540 (Arabidopsis thaliana (Mouse-ear cress)).